A 136-amino-acid chain; its full sequence is MKTFKLVDLNVERVDKEEQSIEQFPLIDGLIINKEDGENHWLIEALVQKEHLSFFEQLQNSQSEAKVFVTITKKSNRPAQLTAAVKNIVKLEESIQVLLYGQMVTRKQQGTETILESLVKEGYTGTKLIEAFKQKL.

This is an uncharacterized protein from Bacillus subtilis (strain 168).